The primary structure comprises 423 residues: G-protein coupled receptor 83 (423 aa).

Positions 1–17 (MKVPPVLLLFLLSSVRA) are cleaved as a signal peptide. The Extracellular portion of the chain corresponds to 18–71 (TEQPQVVTEHPSMEAALTGPNASSHFWANYTFSDWQNFVGRRRYGAESQNPTVK). Residues Asn38 and Asn46 are each glycosylated (N-linked (GlcNAc...) asparagine). Residues 72–92 (ALLIVAYSFTIVFSLFGNVLV) traverse the membrane as a helical segment. The Cytoplasmic segment spans residues 93 to 107 (CHVIFKNQRMHSATS). A helical transmembrane segment spans residues 108–129 (LFIVNLAVADIMITLLNTPFTL). Residues 130–145 (VRFVNSTWVFGKGMCH) lie on the Extracellular side of the membrane. N-linked (GlcNAc...) asparagine glycosylation occurs at Asn134. The cysteines at positions 144 and 224 are disulfide-linked. Residues 146–167 (VSRFAQYCSLHVSALTLTAIAV) traverse the membrane as a helical segment. The Cytoplasmic segment spans residues 168 to 186 (DRHQVIMHPLKPRISITKG). The chain crosses the membrane as a helical span at residues 187–208 (VIYIAVIWVMATFFSLPHAICQ). Residues 209 to 238 (KLFTFKYSEDIVRSLCLPDFPEPADLFWKY) lie on the Extracellular side of the membrane. A helical membrane pass occupies residues 239 to 260 (LDLATFILLYLLPLFIISVAYA). The Cytoplasmic segment spans residues 261–293 (RVAKKLWLCNTIGDVTTEQYLALRRKKKTTVKM). A helical transmembrane segment spans residues 294-315 (LVLVVVLFALCWFPLNCYVLLL). Over 316 to 327 (SSKAIHTNNALY) the chain is Extracellular. The chain crosses the membrane as a helical span at residues 328-348 (FAFHWFAMSSTCYNPFIYCWL). Topologically, residues 349 to 423 (NENFRVELKA…SSVEPVVAMS (75 aa)) are cytoplasmic. Positions 389 to 423 (SHGRRAPLPNHHLPSSQIQSGKTDLSSVEPVVAMS) are disordered. Residues 401 to 414 (LPSSQIQSGKTDLS) are compositionally biased toward polar residues.

The protein belongs to the G-protein coupled receptor 1 family. Predominantly expressed in the brain, with moderate expression in the hypothalamus. Expressed in the thymus.

It is found in the cell membrane. Its function is as follows. G-protein coupled receptor for PEN, a neuropeptide produced from the precursor protein, proSAAS (encoded by PCSK1N). Acts through a G(i)- and G(q)-alpha-alpha-mediated pathway in response to PEN. Plays a role in food intake and body weight regulation. May contribute to the regulation of anxiety-related behaviors. The protein is G-protein coupled receptor 83 of Mus musculus (Mouse).